Reading from the N-terminus, the 279-residue chain is uncharacterized protein (279 aa).

A run of 3 helical transmembrane segments spans residues 1–21 (MGFI…LCGI), 38–58 (FACH…SVVA), and 131–151 (SLRY…VFID).

This sequence belongs to the 1-acyl-sn-glycerol-3-phosphate acyltransferase family.

The protein resides in the endoplasmic reticulum membrane. This is an uncharacterized protein from Schizosaccharomyces pombe (strain 972 / ATCC 24843) (Fission yeast).